Here is a 188-residue protein sequence, read N- to C-terminus: Elongation factor P (188 aa).

The protein belongs to the elongation factor P family.

It localises to the cytoplasm. It functions in the pathway protein biosynthesis; polypeptide chain elongation. Functionally, involved in peptide bond synthesis. Stimulates efficient translation and peptide-bond synthesis on native or reconstituted 70S ribosomes in vitro. Probably functions indirectly by altering the affinity of the ribosome for aminoacyl-tRNA, thus increasing their reactivity as acceptors for peptidyl transferase. This Phytoplasma mali (strain AT) protein is Elongation factor P.